A 406-amino-acid chain; its full sequence is S-adenosylmethionine synthase (406 aa).

Histidine 5 provides a ligand contact to ATP. Aspartate 7 lines the Mg(2+) pocket. K(+) is bound at residue glutamate 33. L-methionine-binding residues include glutamate 46 and glutamine 89. The flexible loop stretch occupies residues 89–99; it reads QSPDIAQGVDT. ATP is bound by residues 164 to 166, 240 to 241, aspartate 249, 255 to 256, alanine 272, and lysine 276; these read DGK, KF, and RK. Residue aspartate 249 coordinates L-methionine. Lysine 280 serves as a coordination point for L-methionine.

Belongs to the AdoMet synthase family. Homotetramer; dimer of dimers. Mg(2+) serves as cofactor. It depends on K(+) as a cofactor.

The protein localises to the cytoplasm. It carries out the reaction L-methionine + ATP + H2O = S-adenosyl-L-methionine + phosphate + diphosphate. The protein operates within amino-acid biosynthesis; S-adenosyl-L-methionine biosynthesis; S-adenosyl-L-methionine from L-methionine: step 1/1. Its function is as follows. Catalyzes the formation of S-adenosylmethionine (AdoMet) from methionine and ATP. The overall synthetic reaction is composed of two sequential steps, AdoMet formation and the subsequent tripolyphosphate hydrolysis which occurs prior to release of AdoMet from the enzyme. The sequence is that of S-adenosylmethionine synthase from Synechococcus sp. (strain ATCC 27144 / PCC 6301 / SAUG 1402/1) (Anacystis nidulans).